The chain runs to 477 residues: Aspartyl/glutamyl-tRNA(Asn/Gln) amidotransferase subunit B (477 aa).

This sequence belongs to the GatB/GatE family. GatB subfamily. Heterotrimer of A, B and C subunits.

The enzyme catalyses L-glutamyl-tRNA(Gln) + L-glutamine + ATP + H2O = L-glutaminyl-tRNA(Gln) + L-glutamate + ADP + phosphate + H(+). The catalysed reaction is L-aspartyl-tRNA(Asn) + L-glutamine + ATP + H2O = L-asparaginyl-tRNA(Asn) + L-glutamate + ADP + phosphate + 2 H(+). Allows the formation of correctly charged Asn-tRNA(Asn) or Gln-tRNA(Gln) through the transamidation of misacylated Asp-tRNA(Asn) or Glu-tRNA(Gln) in organisms which lack either or both of asparaginyl-tRNA or glutaminyl-tRNA synthetases. The reaction takes place in the presence of glutamine and ATP through an activated phospho-Asp-tRNA(Asn) or phospho-Glu-tRNA(Gln). The chain is Aspartyl/glutamyl-tRNA(Asn/Gln) amidotransferase subunit B from Clostridium tetani (strain Massachusetts / E88).